Reading from the N-terminus, the 147-residue chain is Transcriptional regulator MraZ (147 aa).

SpoVT-AbrB domains lie at 5–52 (SHAI…PETE) and 81–124 (ATTL…SEEA).

Belongs to the MraZ family. As to quaternary structure, forms oligomers.

The protein localises to the cytoplasm. It is found in the nucleoid. The protein is Transcriptional regulator MraZ of Saccharophagus degradans (strain 2-40 / ATCC 43961 / DSM 17024).